Consider the following 99-residue polypeptide: MEIKITEVKENKLIGRKEIYFEIYHPGEPTPSRKDVKGKLVAMLDLNPETTVIQYIRSYFGSYKSKGYAKYYYDKDRMLYIEPEYILIRDGIIEKKEGE.

This sequence belongs to the eukaryotic ribosomal protein eS24 family.

The sequence is that of Small ribosomal subunit protein eS24 from Pyrococcus abyssi (strain GE5 / Orsay).